Consider the following 398-residue polypeptide: 1-deoxy-D-xylulose 5-phosphate reductoisomerase (398 aa).

7 residues coordinate NADPH: threonine 21, glycine 22, serine 23, isoleucine 24, glycine 47, asparagine 50, and asparagine 127. Residue lysine 128 coordinates 1-deoxy-D-xylulose 5-phosphate. Residue glutamate 129 coordinates NADPH. Residue aspartate 151 coordinates Mn(2+). Residues serine 152, glutamate 153, serine 177, and histidine 200 each coordinate 1-deoxy-D-xylulose 5-phosphate. Residue glutamate 153 coordinates Mn(2+). An NADPH-binding site is contributed by glycine 206. 1-deoxy-D-xylulose 5-phosphate is bound by residues serine 213, asparagine 218, lysine 219, and glutamate 222. Position 222 (glutamate 222) interacts with Mn(2+).

This sequence belongs to the DXR family. The cofactor is Mg(2+). Requires Mn(2+) as cofactor.

The catalysed reaction is 2-C-methyl-D-erythritol 4-phosphate + NADP(+) = 1-deoxy-D-xylulose 5-phosphate + NADPH + H(+). The protein operates within isoprenoid biosynthesis; isopentenyl diphosphate biosynthesis via DXP pathway; isopentenyl diphosphate from 1-deoxy-D-xylulose 5-phosphate: step 1/6. Its function is as follows. Catalyzes the NADPH-dependent rearrangement and reduction of 1-deoxy-D-xylulose-5-phosphate (DXP) to 2-C-methyl-D-erythritol 4-phosphate (MEP). The polypeptide is 1-deoxy-D-xylulose 5-phosphate reductoisomerase (Mycolicibacterium smegmatis (strain ATCC 700084 / mc(2)155) (Mycobacterium smegmatis)).